We begin with the raw amino-acid sequence, 372 residues long: Homoserine dehydrogenase (372 aa).

The NAD(+) site is built by V13, G15, V16, and T99. Residues V16 and T99 each coordinate NADP(+). Residues V16, T99, S100, and K123 each coordinate NADPH. K123 is a binding site for NADP(+). Residues E150, V153, A155, and L157 each contribute to the Na(+) site. The NADP(+) site is built by G216 and E219. Residues E219 and D230 each contribute to the L-homoserine site. K234 serves as the catalytic Proton donor. G352 is an NAD(+) binding site. G352 provides a ligand contact to NADP(+). G352 lines the NADPH pocket.

Belongs to the homoserine dehydrogenase family. As to quaternary structure, homodimer. The cofactor is a metal cation.

The enzyme catalyses L-homoserine + NADP(+) = L-aspartate 4-semialdehyde + NADPH + H(+). It catalyses the reaction L-homoserine + NAD(+) = L-aspartate 4-semialdehyde + NADH + H(+). The protein operates within amino-acid biosynthesis; L-methionine biosynthesis via de novo pathway; L-homoserine from L-aspartate: step 3/3. It functions in the pathway amino-acid biosynthesis; L-threonine biosynthesis; L-threonine from L-aspartate: step 3/5. Catalyzes the conversion of L-aspartate-beta-semialdehyde (L-Asa) to L-homoserine (L-Hse), the third step in the biosynthesis of amino acids that derive from aspartate (the aspartate family of amino acids), including methioinine and threonine, the latter of which is a precursor to isoleucine; production of homoserine leads to a branch-point in the pathway as it can either be O-phosphorylated for processing to threonine, or O-acylated for processing to methionine. In Paracoccidioides brasiliensis (strain Pb18), this protein is Homoserine dehydrogenase.